The chain runs to 732 residues: Elongation factor 2 (732 aa).

Positions 19–230 (ERIRNMGIAA…VSFKDIVELT (212 aa)) constitute a tr-type G domain. Residues 28-35 (AHIDHGKT), 94-98 (DTPGH), and 148-151 (NKVD) each bind GTP. His-597 is subject to Diphthamide.

It belongs to the TRAFAC class translation factor GTPase superfamily. Classic translation factor GTPase family. EF-G/EF-2 subfamily.

Its subcellular location is the cytoplasm. In terms of biological role, catalyzes the GTP-dependent ribosomal translocation step during translation elongation. During this step, the ribosome changes from the pre-translocational (PRE) to the post-translocational (POST) state as the newly formed A-site-bound peptidyl-tRNA and P-site-bound deacylated tRNA move to the P and E sites, respectively. Catalyzes the coordinated movement of the two tRNA molecules, the mRNA and conformational changes in the ribosome. The sequence is that of Elongation factor 2 from Thermococcus gammatolerans (strain DSM 15229 / JCM 11827 / EJ3).